We begin with the raw amino-acid sequence, 423 residues long: Nucleoporin NUP42 (423 aa).

Residues 1-25 (MAICQFFLQGRCRFGDRCWNEHPGA) form a C3H1-type zinc finger. The stretch at 14-15 (FG) is one FG 1 repeat. A disordered region spans residues 24–85 (GARGAGGGRQ…EKPYFSSFDS (62 aa)). The span at 40–69 (SGNNRRGWNTTSQRYSNVIQPSSFSKSTPW) shows a compositional bias: polar residues. The tract at residues 94-170 (GFGLSENPFA…EYHNFLTSNN (77 aa)) is interaction with HIV-1 Vpr. The FG 2 repeat unit spans residues 95-96 (FG). Serine 106 is modified (phosphoserine). FG repeat units follow at residues 218–219 (FG), 220–221 (FG), 265–266 (FG), 271–272 (FG), 288–289 (FG), 290–291 (FG), 311–312 (FG), 336–337 (FG), 345–346 (FG), and 364–365 (FG). The interval 365–423 (GNSSISTSLSASSSIIATDNVLFTPRDKLTVEELEQFQSKKFTLGKIPLKPPPLELLNV) is interaction with GLE1.

Probable component of the nuclear pore complex (NPC). Interacts with nuclear export protein NXF1. Interacts with GLE1. Able to form a heterotrimer with NUP155 and GLE1 in vitro. Interacts with XPO1. In terms of assembly, (Microbial infection) Interacts with the HIV-1 virus proteins Rev and Vpr. The interaction with HIV-1 Rev, a protein that mediates nuclear export of unspliced viral RNAs, suggests that its function may be bypassed by the HIV-1 virus. Post-translationally, O-glycosylated. Ubiquitously expressed.

The protein localises to the nucleus. Its subcellular location is the nuclear pore complex. It is found in the nucleus membrane. Its function is as follows. Required for the export of mRNAs containing poly(A) tails from the nucleus into the cytoplasm. (Microbial infection) In case of infection by HIV-1, it may participate in the docking of viral Vpr at the nuclear envelope. This Homo sapiens (Human) protein is Nucleoporin NUP42.